The sequence spans 155 residues: Histone H2B.4 (155 aa).

Basic and acidic residues predominate over residues 1 to 28 (MAPKTKEEKPASEAVEPKAEAKPKAEKA). Residues 1–62 (MAPKTKEEKP…GDKKKKKAKV (62 aa)) form a disordered region. Over residues 29 to 40 (PKKKEKKAPAKK) the composition is skewed to basic residues. Lysine 151 is covalently cross-linked (Glycyl lysine isopeptide (Lys-Gly) (interchain with G-Cter in ubiquitin)).

Belongs to the histone H2B family. In terms of assembly, the nucleosome is a histone octamer containing two molecules each of H2A, H2B, H3 and H4 assembled in one H3-H4 heterotetramer and two H2A-H2B heterodimers. The octamer wraps approximately 147 bp of DNA. Post-translationally, monoubiquitinated to form H2BK143ub1; may give a specific tag for epigenetic transcriptional activation.

It localises to the nucleus. Its subcellular location is the chromosome. Functionally, core component of nucleosome. Nucleosomes wrap and compact DNA into chromatin, limiting DNA accessibility to the cellular machineries which require DNA as a template. Histones thereby play a central role in transcription regulation, DNA repair, DNA replication and chromosomal stability. DNA accessibility is regulated via a complex set of post-translational modifications of histones, also called histone code, and nucleosome remodeling. In Volvox carteri (Green alga), this protein is Histone H2B.4.